A 262-amino-acid chain; its full sequence is MGGEGGAEPVIHFVFVHGASHGAWCWYKLTTLLDAAGFKSTSVDLTGAGISLIDSNIVFDSDQYNRPLFSLLSDLPPHHKVILVGHSIGGGSVTEALCKFTDKISMAIYLAASMVQPGSIPSPHLSNIHVGEEDIWEYTYGEGTDKPPTGVLMKPEFIRHYYYSQSPLEDVTLSSKLLRPAPMRAFQDLDKLPPNPEAEKVPRVYIKTAKDNLFDSVRQDLLVENWPPSQLYVLEDSDHSAFFSVPTTLFAYLLRAVSFLQR.

Catalysis depends on Ser87, which acts as the Acyl-ester intermediate. Active-site charge relay system residues include Asp211 and His239.

It belongs to the AB hydrolase superfamily. Methylesterase family.

It is found in the cytoplasm. The catalysed reaction is methyl (indol-3-yl)acetate + H2O = (indol-3-yl)acetate + methanol + H(+). It carries out the reaction methyl (-)-jasmonate + H2O = jasmonate + methanol + H(+). It catalyses the reaction primary fluorescent dioxobilin-type chlorophyll catabolite + H2O = O13(4)-desmethyl pFDCC + methanol + H(+). It functions in the pathway plant hormone biosynthesis. The protein operates within lipid metabolism; oxylipin biosynthesis. It participates in porphyrin-containing compound metabolism; chlorophyll degradation. Involved in the chlorophyll breakdown by its action in fluorescent chlorophyll catabolites (FCCs) demethylation. Demethylates the C13(2)-carboxymethyl group present at the isocyclic ring of chlorophyll. Uses primary fluorescent dioxobilin-type chlorophyll catabolite (pFDCC) as substrate to produce O13(4)-desmethyl pFDCC. Also able to catalyze pheophorbides in vitro. Methylesterase shown to have carboxylesterase activity, methyl indole-3-acetic acid (MeIAA) esterase activity and methyl jasmonate (MeJA) esterase activity in vitro. This Arabidopsis thaliana (Mouse-ear cress) protein is pFDCC methylesterase MES16.